The primary structure comprises 358 residues: Methylthioribose-1-phosphate isomerase (358 aa).

Met-1 carries the post-translational modification N-acetylmethionine. Catalysis depends on Asp-248, which acts as the Proton donor.

This sequence belongs to the eIF-2B alpha/beta/delta subunits family. MtnA subfamily.

It localises to the cytoplasm. Its subcellular location is the nucleus. The enzyme catalyses 5-(methylsulfanyl)-alpha-D-ribose 1-phosphate = 5-(methylsulfanyl)-D-ribulose 1-phosphate. It functions in the pathway amino-acid biosynthesis; L-methionine biosynthesis via salvage pathway; L-methionine from S-methyl-5-thio-alpha-D-ribose 1-phosphate: step 1/6. Its function is as follows. Catalyzes the interconversion of methylthioribose-1-phosphate (MTR-1-P) into methylthioribulose-1-phosphate (MTRu-1-P). This is Methylthioribose-1-phosphate isomerase from Bos taurus (Bovine).